Reading from the N-terminus, the 297-residue chain is ClpXP adapter protein SpxH (297 aa).

The protein belongs to the SpxH family. As to quaternary structure, interacts with Spx.

The protein localises to the cytoplasm. Functionally, adapter protein required for efficient degradation of Spx by ClpXP under non-stress conditions. Interaction with Spx stabilizes Spx and exposes the C-terminus of Spx for recognition and proteolysis by ClpXP. The sequence is that of ClpXP adapter protein SpxH from Bacillus thuringiensis subsp. konkukian (strain 97-27).